We begin with the raw amino-acid sequence, 78 residues long: ATP synthase subunit c (78 aa).

2 helical membrane passes run 11–31 and 53–73; these read FIGAGLATIGLGGAGIGVGHV and LFVGIAFAEALGIFSFLIALL.

It belongs to the ATPase C chain family. In terms of assembly, F-type ATPases have 2 components, F(1) - the catalytic core - and F(0) - the membrane proton channel. F(1) has five subunits: alpha(3), beta(3), gamma(1), delta(1), epsilon(1). F(0) has four main subunits: a(1), b(1), b'(1) and c(10-14). The alpha and beta chains form an alternating ring which encloses part of the gamma chain. F(1) is attached to F(0) by a central stalk formed by the gamma and epsilon chains, while a peripheral stalk is formed by the delta, b and b' chains.

It is found in the cell inner membrane. In terms of biological role, f(1)F(0) ATP synthase produces ATP from ADP in the presence of a proton or sodium gradient. F-type ATPases consist of two structural domains, F(1) containing the extramembraneous catalytic core and F(0) containing the membrane proton channel, linked together by a central stalk and a peripheral stalk. During catalysis, ATP synthesis in the catalytic domain of F(1) is coupled via a rotary mechanism of the central stalk subunits to proton translocation. Its function is as follows. Key component of the F(0) channel; it plays a direct role in translocation across the membrane. A homomeric c-ring of between 10-14 subunits forms the central stalk rotor element with the F(1) delta and epsilon subunits. The polypeptide is ATP synthase subunit c (Cereibacter sphaeroides (strain ATCC 17025 / ATH 2.4.3) (Rhodobacter sphaeroides)).